The following is an 855-amino-acid chain: DNA mismatch repair protein MutS (855 aa).

613-620 (GPNMGGKS) provides a ligand contact to ATP. The disordered stretch occupies residues 795-816 (ETTSLPHEVPSQQSGKPASPMQ). Polar residues predominate over residues 796–816 (TTSLPHEVPSQQSGKPASPMQ).

This sequence belongs to the DNA mismatch repair MutS family.

In terms of biological role, this protein is involved in the repair of mismatches in DNA. It is possible that it carries out the mismatch recognition step. This protein has a weak ATPase activity. The chain is DNA mismatch repair protein MutS from Pseudomonas paraeruginosa (strain DSM 24068 / PA7) (Pseudomonas aeruginosa (strain PA7)).